The chain runs to 276 residues: MQVVTTIEEVRAARRQWAEVGFVPTMGFLHAGHLSLVQQSKAENGVAIASIFVNPTQFGPNEDFASYPRDTPRDLALLEAAGCDLVWMPSVEEIYPAGFSSYVEVEGVTAPLEGARRPGHFRGVATVVTKLFNVVQPTKAYFGQKDAQQTVVIRQFVRDLAMPVEVVIAPTIREADGLAMSSRNSYLNAEQRAAAPVLYRALTAAQTAYAAGQTDAEAIRQLMLETLAQEPLAQVDYVSIADPRSLQELTTIDQQGVLVSLAVRIGKTRLIDNLVM.

Met-26–His-33 is a binding site for ATP. Residue His-33 is the Proton donor of the active site. Residue Gln-57 participates in (R)-pantoate binding. Gln-57 lines the beta-alanine pocket. Gly-143 to Asp-146 serves as a coordination point for ATP. Gln-149 provides a ligand contact to (R)-pantoate. ATP-binding positions include Ile-172 and Met-180–Arg-183.

It belongs to the pantothenate synthetase family. Homodimer.

The protein localises to the cytoplasm. It catalyses the reaction (R)-pantoate + beta-alanine + ATP = (R)-pantothenate + AMP + diphosphate + H(+). Its pathway is cofactor biosynthesis; (R)-pantothenate biosynthesis; (R)-pantothenate from (R)-pantoate and beta-alanine: step 1/1. Its function is as follows. Catalyzes the condensation of pantoate with beta-alanine in an ATP-dependent reaction via a pantoyl-adenylate intermediate. The chain is Pantothenate synthetase from Herpetosiphon aurantiacus (strain ATCC 23779 / DSM 785 / 114-95).